Consider the following 369-residue polypeptide: tRNA 2-selenouridine synthase (369 aa).

Residues 12 to 136 enclose the Rhodanese domain; that stretch reads FLDDIPLMDV…LRNFLFETTR (125 aa). Cys95 serves as the catalytic S-selanylcysteine intermediate.

Belongs to the SelU family. As to quaternary structure, monomer.

The enzyme catalyses 5-methylaminomethyl-2-thiouridine(34) in tRNA + selenophosphate + (2E)-geranyl diphosphate + H2O + H(+) = 5-methylaminomethyl-2-selenouridine(34) in tRNA + (2E)-thiogeraniol + phosphate + diphosphate. It catalyses the reaction 5-methylaminomethyl-2-thiouridine(34) in tRNA + (2E)-geranyl diphosphate = 5-methylaminomethyl-S-(2E)-geranyl-thiouridine(34) in tRNA + diphosphate. The catalysed reaction is 5-methylaminomethyl-S-(2E)-geranyl-thiouridine(34) in tRNA + selenophosphate + H(+) = 5-methylaminomethyl-2-(Se-phospho)selenouridine(34) in tRNA + (2E)-thiogeraniol. It carries out the reaction 5-methylaminomethyl-2-(Se-phospho)selenouridine(34) in tRNA + H2O = 5-methylaminomethyl-2-selenouridine(34) in tRNA + phosphate. Its function is as follows. Involved in the post-transcriptional modification of the uridine at the wobble position (U34) of tRNA(Lys), tRNA(Glu) and tRNA(Gln). Catalyzes the conversion of 2-thiouridine (S2U-RNA) to 2-selenouridine (Se2U-RNA). Acts in a two-step process involving geranylation of 2-thiouridine (S2U) to S-geranyl-2-thiouridine (geS2U) and subsequent selenation of the latter derivative to 2-selenouridine (Se2U) in the tRNA chain. This Pseudomonas aeruginosa (strain ATCC 15692 / DSM 22644 / CIP 104116 / JCM 14847 / LMG 12228 / 1C / PRS 101 / PAO1) protein is tRNA 2-selenouridine synthase.